The sequence spans 357 residues: Probable cinnamyl alcohol dehydrogenase (357 aa).

Cysteine 47 is a Zn(2+) binding site. Threonine 49 contributes to the NADP(+) binding site. Residues histidine 69, glutamate 70, cysteine 100, cysteine 103, cysteine 106, cysteine 114, and cysteine 163 each contribute to the Zn(2+) site. NADP(+)-binding positions include threonine 167, 188-193, 211-216, threonine 251, glycine 275, and 298-300; these read GLGGVG, SSSDKK, and SFI.

It belongs to the zinc-containing alcohol dehydrogenase family. In terms of assembly, homodimer. Zn(2+) serves as cofactor.

It carries out the reaction (E)-cinnamyl alcohol + NADP(+) = (E)-cinnamaldehyde + NADPH + H(+). The enzyme catalyses (E)-coniferol + NADP(+) = (E)-coniferaldehyde + NADPH + H(+). It catalyses the reaction (E)-sinapyl alcohol + NADP(+) = (E)-sinapaldehyde + NADPH + H(+). The catalysed reaction is (E)-4-coumaroyl alcohol + NADP(+) = (E)-4-coumaraldehyde + NADPH + H(+). It carries out the reaction (E)-caffeyl alcohol + NADP(+) = (E)-caffeyl aldehyde + NADPH + H(+). The protein operates within aromatic compound metabolism; phenylpropanoid biosynthesis. Its function is as follows. Involved in lignin biosynthesis. Catalyzes the final step specific for the production of lignin monomers. Catalyzes the NADPH-dependent reduction of coniferaldehyde, 5-hydroxyconiferaldehyde, sinapaldehyde, 4-coumaraldehyde and caffeyl aldehyde to their respective alcohols. The chain is Probable cinnamyl alcohol dehydrogenase from Populus deltoides (Eastern poplar).